The primary structure comprises 631 residues: E3 ubiquitin-protein ligase Zswim2 (631 aa).

The segment at 54 to 87 (FRVLLGNPHECSCPTFLKRGELCKHICWVLLKKF) adopts an SWIM-type zinc-finger fold. The interval 139 to 348 (KDINAGDICP…APGYQCRLCL (210 aa)) is UBE2D1-binding. The segment at 147–199 (CPICQEVLLEKKLPVTFCRFGCGNNVHIKCMRILANYQDTGSDSSVLRCPLCR) adopts an RING-type 1 zinc-finger fold. The ZZ-type zinc finger occupies 230–281 (HLGIPCNNCNQLPIEGRCYKCTECVEYHLCQECFDSCCHSSHAFASREKRNQ). The Zn(2+) site is built by Cys-235, Cys-238, Cys-250, Cys-253, Cys-259, Cys-262, His-268, and His-271. The RING-type 2 zinc-finger motif lies at 344-386 (CRLCLKSFSFGQYTRLLPCTHKFHRKCIDNWLLHKCNSCPIDR). Residues 589 to 614 (SKRQNNSMGKVRQKLGHPPRRPAYPP) form a disordered region. Over residues 599-608 (VRQKLGHPPR) the composition is skewed to basic residues.

In terms of assembly, dimer. Interacts with UBE2D1. Post-translationally, polyubiquitinated. Polyubiquitination is followed by degradation via the proteasome. Expressed only in testis.

It catalyses the reaction S-ubiquitinyl-[E2 ubiquitin-conjugating enzyme]-L-cysteine + [acceptor protein]-L-lysine = [E2 ubiquitin-conjugating enzyme]-L-cysteine + N(6)-ubiquitinyl-[acceptor protein]-L-lysine.. Functionally, E3 ubiquitin-protein ligase involved in the regulation of Fas-, DR3- and DR4-mediated apoptosis. Functions in conjunction with the UBE2D1, UBE2D3 and UBE2E1 E2 ubiquitin-conjugating enzymes. The polypeptide is E3 ubiquitin-protein ligase Zswim2 (Zswim2) (Mus musculus (Mouse)).